A 149-amino-acid polypeptide reads, in one-letter code: Internal scaffolding protein ORF3 (149 aa).

The protein belongs to the microvidae B protein family.

It localises to the host cytoplasm. Its function is as follows. Participates in the assembly of the viral procapsid in the cytoplasm. Released from the procapsid upon genome packaging, possibly through affinity displacement by the protein ORF8, or by proteolysis. The chain is Internal scaffolding protein ORF3 from Spiroplasma virus 4 (SpV4).